Here is a 328-residue protein sequence, read N- to C-terminus: tRNA dimethylallyltransferase (328 aa).

10 to 17 (GPTASGKT) serves as a coordination point for ATP. 12 to 17 (TASGKT) provides a ligand contact to substrate.

Belongs to the IPP transferase family. In terms of assembly, monomer. It depends on Mg(2+) as a cofactor.

It carries out the reaction adenosine(37) in tRNA + dimethylallyl diphosphate = N(6)-dimethylallyladenosine(37) in tRNA + diphosphate. In terms of biological role, catalyzes the transfer of a dimethylallyl group onto the adenine at position 37 in tRNAs that read codons beginning with uridine, leading to the formation of N6-(dimethylallyl)adenosine (i(6)A). This is tRNA dimethylallyltransferase from Bifidobacterium longum subsp. infantis (strain ATCC 15697 / DSM 20088 / JCM 1222 / NCTC 11817 / S12).